A 92-amino-acid polypeptide reads, in one-letter code: Small ribosomal subunit protein uS19 (92 aa).

Belongs to the universal ribosomal protein uS19 family.

Protein S19 forms a complex with S13 that binds strongly to the 16S ribosomal RNA. This is Small ribosomal subunit protein uS19 from Chelativorans sp. (strain BNC1).